Consider the following 191-residue polypeptide: dCTP deaminase (191 aa).

Residues 112 to 117 (KSTYAR), 136 to 138 (TLE), Q157, Y173, and Q183 each bind dCTP. E138 serves as the catalytic Proton donor/acceptor.

The protein belongs to the dCTP deaminase family. As to quaternary structure, homotrimer.

The enzyme catalyses dCTP + H2O + H(+) = dUTP + NH4(+). The protein operates within pyrimidine metabolism; dUMP biosynthesis; dUMP from dCTP (dUTP route): step 1/2. Functionally, catalyzes the deamination of dCTP to dUTP. This chain is dCTP deaminase, found in Psychrobacter arcticus (strain DSM 17307 / VKM B-2377 / 273-4).